Reading from the N-terminus, the 314-residue chain is Oxaloacetate tautomerase FAHD2B, mitochondrial (314 aa).

Residues 1–84 (MLVSGRRRLL…ATLSVARRAL (84 aa)) constitute a mitochondrion transit peptide. The Mg(2+) site is built by glutamate 159, glutamate 161, and aspartate 190.

The protein belongs to the FAH family. Mg(2+) is required as a cofactor. Mn(2+) serves as cofactor.

Its subcellular location is the mitochondrion. The enzyme catalyses oxaloacetate = enol-oxaloacetate. In terms of biological role, tautomerase that converts enol-oxaloacetate, a strong inhibitor of succinate dehydrogenase, to the physiological keto form of oxaloacetate. It is thereby required to maximize aerobic respiration efficiency by preventing succinate dehydrogenase inhibition. This Homo sapiens (Human) protein is Oxaloacetate tautomerase FAHD2B, mitochondrial.